The sequence spans 537 residues: GTPase LSG1-1 (537 aa).

The region spanning 158 to 362 is the CP-type G domain; it reads WRQLWRVLER…LCDCPGLVFP (205 aa). The DARXP motif signature appears at 176 to 180; that stretch reads DARDP. The tract at residues 206–209 is G4; the sequence is NKAD. 206–209 serves as a coordination point for GTP; that stretch reads NKAD. The tract at residues 234 to 236 is G5; the sequence is SAK. A G1 region spans residues 311–318; it reads GYPNVGKS. 314–319 lines the GTP pocket; the sequence is NVGKSS. Residues 337 to 341 form a G2 region; that stretch reads GKTKH. Positions 355-358 are G3; it reads DCPG. Residue G358 participates in GTP binding. The interval 484 to 508 is disordered; the sequence is LGAETREGSQTEKKGEEAPSLGLDQ. Positions 487–500 are enriched in basic and acidic residues; sequence ETREGSQTEKKGEE.

It belongs to the TRAFAC class YlqF/YawG GTPase family. As to expression, ubiquitous, with the highest expression in stem and hypsophyll on day 66.

Its subcellular location is the cytoplasm. Functionally, GTPase that might be redundant with LSG1-2 for ribosome biogenesis. Binds to 23S rRNA. The polypeptide is GTPase LSG1-1 (Arabidopsis thaliana (Mouse-ear cress)).